Here is a 1029-residue protein sequence, read N- to C-terminus: 2-oxoglutarate dehydrogenase, mitochondrial (1029 aa).

Thiamine diphosphate-binding residues include arginine 317, aspartate 415, asparagine 448, isoleucine 450, and glutamine 676. Residues aspartate 415, asparagine 448, and isoleucine 450 each contribute to the Mg(2+) site.

This sequence belongs to the alpha-ketoglutarate dehydrogenase family. Homodimer. Component of the 2-oxoglutarate dehydrogenase complex. The cofactor is thiamine diphosphate. Requires Mg(2+) as cofactor.

The protein resides in the mitochondrion matrix. It catalyses the reaction N(6)-[(R)-lipoyl]-L-lysyl-[protein] + 2-oxoglutarate + H(+) = N(6)-[(R)-S(8)-succinyldihydrolipoyl]-L-lysyl-[protein] + CO2. The 2-oxoglutarate dehydrogenase complex catalyzes the overall conversion of 2-oxoglutarate to succinyl-CoA and CO(2). It contains multiple copies of three enzymatic components: 2-oxoglutarate dehydrogenase (E1), dihydrolipoamide succinyltransferase (E2) and lipoamide dehydrogenase (E3). In Caenorhabditis elegans, this protein is 2-oxoglutarate dehydrogenase, mitochondrial (ogdh-1).